A 271-amino-acid polypeptide reads, in one-letter code: Chymotrypsin-like elastase family member 2A (271 aa).

A signal peptide spans 1 to 16; it reads MIRTLLLSALVAGALS. Residues 17 to 30 constitute a propeptide, activation peptide; it reads CGYPTYEVEDDVSR. In terms of domain architecture, Peptidase S1 spans 31–269; the sequence is VVGGQEATPN…YIDWINSVMA (239 aa). An intrachain disulfide couples Cys-60 to Cys-76. Active-site charge relay system residues include His-75 and Asp-123. Disulfide bonds link Cys-157–Cys-224, Cys-188–Cys-204, and Cys-214–Cys-245. Residue Ser-218 is the Charge relay system of the active site.

This sequence belongs to the peptidase S1 family. Elastase subfamily. In terms of assembly, interacts with CPA1. Interacts with SERPINA1. Highly expressed in pancreas (at mRNA and protein levels). Also expressed in adrenal gland and small intestine.

It localises to the secreted. The enzyme catalyses Preferential cleavage: Leu-|-Xaa, Met-|-Xaa and Phe-|-Xaa. Hydrolyzes elastin.. Elastase that enhances insulin signaling and might have a physiologic role in cellular glucose metabolism. Circulates in plasma and reduces platelet hyperactivation, triggers both insulin secretion and degradation, and increases insulin sensitivity. The chain is Chymotrypsin-like elastase family member 2A from Mus musculus (Mouse).